We begin with the raw amino-acid sequence, 219 residues long: Peroxiredoxin-5, mitochondrial (219 aa).

The transit peptide at 1–57 directs the protein to the mitochondrion; sequence MRLGWLRVLGCRPGSVVSRATIVEGASTTAAGTRGCLEGILEWTFGGVRGFRSAAVA. In terms of domain architecture, Thioredoxin spans 61 to 219; that stretch reads IKVGDAIPSV…SLAPNILSQL (159 aa). Lysine 80 carries the post-translational modification N6-acetyllysine. N6-acetyllysine; alternate is present on lysine 88. Residue lysine 88 is modified to N6-succinyllysine; alternate. Cysteine 105 functions as the Cysteine sulfenic acid (-SOH) intermediate in the catalytic mechanism. A lipid anchor (S-palmitoyl cysteine) is attached at cysteine 105. An intrachain disulfide couples cysteine 105 to cysteine 209. Lysine 121 bears the N6-succinyllysine mark. Phosphoserine is present on serine 187. Residues 217 to 219 carry the Microbody targeting signal motif; it reads SQL.

Belongs to the peroxiredoxin family. Prx5 subfamily. As to quaternary structure, monomer. S-palmitoylated. Palmitoylation occurs on the active site, inhibiting its reactivity; therefore PRDX5 palmitoylation status determines its antioxidant capacity. In terms of processing, S-palmitoylated. Depalmitoylated by ABHD10.

The protein localises to the mitochondrion. It localises to the cytoplasm. The protein resides in the peroxisome matrix. The enzyme catalyses a hydroperoxide + [thioredoxin]-dithiol = an alcohol + [thioredoxin]-disulfide + H2O. Functionally, thiol-specific peroxidase that catalyzes the reduction of hydrogen peroxide and organic hydroperoxides to water and alcohols, respectively. Plays a role in cell protection against oxidative stress by detoxifying peroxides and as sensor of hydrogen peroxide-mediated signaling events. The polypeptide is Peroxiredoxin-5, mitochondrial (PRDX5) (Bos taurus (Bovine)).